We begin with the raw amino-acid sequence, 144 residues long: D-aminoacyl-tRNA deacylase (144 aa).

The short motif at 136-137 (GP) is the Gly-cisPro motif, important for rejection of L-amino acids element.

The protein belongs to the DTD family. In terms of assembly, homodimer.

Its subcellular location is the cytoplasm. The enzyme catalyses glycyl-tRNA(Ala) + H2O = tRNA(Ala) + glycine + H(+). The catalysed reaction is a D-aminoacyl-tRNA + H2O = a tRNA + a D-alpha-amino acid + H(+). Its function is as follows. An aminoacyl-tRNA editing enzyme that deacylates mischarged D-aminoacyl-tRNAs. Also deacylates mischarged glycyl-tRNA(Ala), protecting cells against glycine mischarging by AlaRS. Acts via tRNA-based rather than protein-based catalysis; rejects L-amino acids rather than detecting D-amino acids in the active site. By recycling D-aminoacyl-tRNA to D-amino acids and free tRNA molecules, this enzyme counteracts the toxicity associated with the formation of D-aminoacyl-tRNA entities in vivo and helps enforce protein L-homochirality. In Actinobacillus pleuropneumoniae serotype 5b (strain L20), this protein is D-aminoacyl-tRNA deacylase.